The sequence spans 212 residues: Large ribosomal subunit protein uL3 (212 aa).

Residues 147–166 (GSTGQNQSPGKVFKGKKMPG) are disordered. At Gln-153 the chain carries N5-methylglutamine.

This sequence belongs to the universal ribosomal protein uL3 family. Part of the 50S ribosomal subunit. Forms a cluster with proteins L14 and L19. Methylated by PrmB.

One of the primary rRNA binding proteins, it binds directly near the 3'-end of the 23S rRNA, where it nucleates assembly of the 50S subunit. This is Large ribosomal subunit protein uL3 from Psychrobacter sp. (strain PRwf-1).